The following is a 483-amino-acid chain: Protein nucleotidyltransferase YdiU (483 aa).

8 residues coordinate ATP: glycine 100, glycine 102, arginine 103, lysine 123, aspartate 135, glycine 136, arginine 189, and arginine 196. The active-site Proton acceptor is aspartate 265. 2 residues coordinate Mg(2+): asparagine 266 and aspartate 275. ATP is bound at residue aspartate 275.

It belongs to the SELO family. It depends on Mg(2+) as a cofactor. Mn(2+) is required as a cofactor.

It carries out the reaction L-seryl-[protein] + ATP = 3-O-(5'-adenylyl)-L-seryl-[protein] + diphosphate. It catalyses the reaction L-threonyl-[protein] + ATP = 3-O-(5'-adenylyl)-L-threonyl-[protein] + diphosphate. The catalysed reaction is L-tyrosyl-[protein] + ATP = O-(5'-adenylyl)-L-tyrosyl-[protein] + diphosphate. The enzyme catalyses L-histidyl-[protein] + UTP = N(tele)-(5'-uridylyl)-L-histidyl-[protein] + diphosphate. It carries out the reaction L-seryl-[protein] + UTP = O-(5'-uridylyl)-L-seryl-[protein] + diphosphate. It catalyses the reaction L-tyrosyl-[protein] + UTP = O-(5'-uridylyl)-L-tyrosyl-[protein] + diphosphate. Functionally, nucleotidyltransferase involved in the post-translational modification of proteins. It can catalyze the addition of adenosine monophosphate (AMP) or uridine monophosphate (UMP) to a protein, resulting in modifications known as AMPylation and UMPylation. This is Protein nucleotidyltransferase YdiU from Gloeobacter violaceus (strain ATCC 29082 / PCC 7421).